A 272-amino-acid chain; its full sequence is Small ribosomal subunit protein uS3 (272 aa).

Residues 43–111 (IRELMTTGME…QIQLNILEVK (69 aa)) enclose the KH type-2 domain. The tract at residues 218-272 (AKEAAQPSGRGRGGERRGGGERRRRNDRAERAPRQENAGAGAETPAAAPAEGGNA) is disordered. Residues 229–238 (RGGERRGGGE) show a composition bias toward basic and acidic residues. Over residues 253–272 (ENAGAGAETPAAAPAEGGNA) the composition is skewed to low complexity.

Belongs to the universal ribosomal protein uS3 family. Part of the 30S ribosomal subunit. Forms a tight complex with proteins S10 and S14.

Functionally, binds the lower part of the 30S subunit head. Binds mRNA in the 70S ribosome, positioning it for translation. In Micrococcus luteus (strain ATCC 4698 / DSM 20030 / JCM 1464 / CCM 169 / CCUG 5858 / IAM 1056 / NBRC 3333 / NCIMB 9278 / NCTC 2665 / VKM Ac-2230) (Micrococcus lysodeikticus), this protein is Small ribosomal subunit protein uS3.